A 263-amino-acid polypeptide reads, in one-letter code: Neuferricin (263 aa).

An N-terminal signal peptide occupies residues 1 to 22 (MLRICGLGVVLSLAVAAVAVMA). Positions 35–134 (IRLFLPEELA…KNYVFVGRLV (100 aa)) constitute a Cytochrome b5 heme-binding domain. A disordered region spans residues 220 to 249 (VRTTGPPSDQQDNPRHSNHGDLDNPNLEEY). Positions 231 to 241 (DNPRHSNHGDL) are enriched in basic and acidic residues.

It belongs to the cytochrome b5 family. MAPR subfamily. As to expression, expressed in various tissues including brain, heart, adrenal gland, and kidney. In the brain, mainly expressed in pyramidal cells around the CA3 region of Ammon horn in hippocampus. Present in brain (at protein level).

The protein resides in the secreted. Heme-binding protein which promotes neuronal but not astrocyte differentiation. The polypeptide is Neuferricin (Mus musculus (Mouse)).